A 491-amino-acid polypeptide reads, in one-letter code: Probable glycine dehydrogenase (decarboxylating) subunit 2 (491 aa).

Lys264 is modified (N6-(pyridoxal phosphate)lysine).

The protein belongs to the GcvP family. C-terminal subunit subfamily. The glycine cleavage system is composed of four proteins: P, T, L and H. In this organism, the P 'protein' is a heterodimer of two subunits. Requires pyridoxal 5'-phosphate as cofactor.

It catalyses the reaction N(6)-[(R)-lipoyl]-L-lysyl-[glycine-cleavage complex H protein] + glycine + H(+) = N(6)-[(R)-S(8)-aminomethyldihydrolipoyl]-L-lysyl-[glycine-cleavage complex H protein] + CO2. In terms of biological role, the glycine cleavage system catalyzes the degradation of glycine. The P protein binds the alpha-amino group of glycine through its pyridoxal phosphate cofactor; CO(2) is released and the remaining methylamine moiety is then transferred to the lipoamide cofactor of the H protein. In Coxiella burnetii (strain CbuK_Q154) (Coxiella burnetii (strain Q154)), this protein is Probable glycine dehydrogenase (decarboxylating) subunit 2.